The primary structure comprises 762 residues: 5-methyltetrahydropteroyltriglutamate--homocysteine methyltransferase (762 aa).

Residues 17–20 (REWK) and Lys-111 contribute to the 5-methyltetrahydropteroyltri-L-glutamate site. Residues 435 to 437 (IGS) and Glu-488 contribute to the L-homocysteine site. Residues 435–437 (IGS) and Glu-488 contribute to the L-methionine site. 5-methyltetrahydropteroyltri-L-glutamate is bound by residues 519–520 (RC) and Trp-565. Asp-603 is an L-homocysteine binding site. L-methionine is bound at residue Asp-603. Glu-609 contacts 5-methyltetrahydropteroyltri-L-glutamate. Residues His-645, Cys-647, and Glu-669 each contribute to the Zn(2+) site. The active-site Proton donor is the His-698. Cys-730 is a Zn(2+) binding site.

This sequence belongs to the vitamin-B12 independent methionine synthase family. It depends on Zn(2+) as a cofactor.

It catalyses the reaction 5-methyltetrahydropteroyltri-L-glutamate + L-homocysteine = tetrahydropteroyltri-L-glutamate + L-methionine. It functions in the pathway amino-acid biosynthesis; L-methionine biosynthesis via de novo pathway; L-methionine from L-homocysteine (MetE route): step 1/1. In terms of biological role, catalyzes the transfer of a methyl group from 5-methyltetrahydrofolate to homocysteine resulting in methionine formation. The protein is 5-methyltetrahydropteroyltriglutamate--homocysteine methyltransferase of Bacillus cytotoxicus (strain DSM 22905 / CIP 110041 / 391-98 / NVH 391-98).